The sequence spans 353 residues: MAKAGVMTLSHVDRMNLRTWTMAIACCLLSFVNIVVFSVAAHFPGIGFPCYYPRIIDFDNMNLTMYNAIHHLTPQLFLDPVQLIVYVIFTELIFFCVLSYYIVCWVQIYFRSEHGTQVNQSTRDINFMGDSATCFTFVLTMDTFQIFLLSLSFRLPSMVAFSKCMYFMCLTAFVVTLVTHYESRERSAFALSKIHPKLQGTIRYRTAVVNLTQLILGFATMVLAMSLALGFGNSFFVKTAHVVFGAMVAFAIVACVYFSIIESVLSRYMKVQFGYHIGTILGVCGAMYPIIRYEALNASSYARDINIGITVLLLLCVAFSVIRTVRFLLRRNKRYRALALDNEEIRALRSDAE.

The Intravirion portion of the chain corresponds to 1 to 27; it reads MAKAGVMTLSHVDRMNLRTWTMAIACC. The helical transmembrane segment at 28–48 threads the bilayer; sequence LLSFVNIVVFSVAAHFPGIGF. Over 49–82 the chain is Virion surface; the sequence is PCYYPRIIDFDNMNLTMYNAIHHLTPQLFLDPVQ. A helical membrane pass occupies residues 83-103; sequence LIVYVIFTELIFFCVLSYYIV. At 104-132 the chain is on the intravirion side; it reads CWVQIYFRSEHGTQVNQSTRDINFMGDSA. A helical membrane pass occupies residues 133–153; the sequence is TCFTFVLTMDTFQIFLLSLSF. At 154–157 the chain is on the virion surface side; sequence RLPS. A helical transmembrane segment spans residues 158 to 178; that stretch reads MVAFSKCMYFMCLTAFVVTLV. Residues 179-210 are Intravirion-facing; it reads THYESRERSAFALSKIHPKLQGTIRYRTAVVN. A helical membrane pass occupies residues 211 to 231; the sequence is LTQLILGFATMVLAMSLALGF. Residues 232–240 lie on the Virion surface side of the membrane; the sequence is GNSFFVKTA. A helical transmembrane segment spans residues 241-261; sequence HVVFGAMVAFAIVACVYFSII. The Intravirion segment spans residues 262 to 270; sequence ESVLSRYMK. The chain crosses the membrane as a helical span at residues 271-291; it reads VQFGYHIGTILGVCGAMYPII. The Virion surface segment spans residues 292 to 304; it reads RYEALNASSYARD. Residues 305–325 traverse the membrane as a helical segment; that stretch reads INIGITVLLLLCVAFSVIRTV. The Intravirion segment spans residues 326-353; sequence RFLLRRNKRYRALALDNEEIRALRSDAE.

The protein belongs to the herpesviridae glycoprotein M family. In terms of assembly, interacts (via N-terminus) with gN (via N-terminus). The gM-gN heterodimer forms the gCII complex.

Its subcellular location is the virion membrane. It localises to the host Golgi apparatus. It is found in the host trans-Golgi network. The protein resides in the host endosome membrane. The protein localises to the host nucleus inner membrane. In terms of biological role, envelope glycoprotein important for virion assembly and egress. Plays a role in the correct incorporation of gH-gL into virion membrane. Directs the glycoprotein N (gN) to the host trans-Golgi network. This is Envelope glycoprotein M from Mus musculus (Mouse).